The chain runs to 187 residues: Adenylate kinase 1 (187 aa).

14–19 lines the ATP pocket; it reads GSGKGT. The tract at residues 34 to 63 is NMP; sequence STGDMLRQAIADGTELGNQAKGYMDKGELV. Residues T35, R40, 61–63, 89–92, and Q96 contribute to the AMP site; these read ELV and GFPR. Residues 130-136 form an LID region; it reads ARGRADD. R131 contributes to the ATP binding site. AMP contacts are provided by R133 and R144. Position 172 (Q172) interacts with ATP.

This sequence belongs to the adenylate kinase family. Monomer.

The protein localises to the cytoplasm. It catalyses the reaction AMP + ATP = 2 ADP. Its pathway is purine metabolism; AMP biosynthesis via salvage pathway; AMP from ADP: step 1/1. Functionally, catalyzes the reversible transfer of the terminal phosphate group between ATP and AMP. Plays an important role in cellular energy homeostasis and in adenine nucleotide metabolism. The sequence is that of Adenylate kinase 1 from Synechocystis sp. (strain ATCC 27184 / PCC 6803 / Kazusa).